We begin with the raw amino-acid sequence, 560 residues long: Dihydroxy-acid dehydratase (560 aa).

Residue Cys52 coordinates [2Fe-2S] cluster. Asp84 is a Mg(2+) binding site. Cys125 contacts [2Fe-2S] cluster. Residues Asp126 and Lys127 each coordinate Mg(2+). An N6-carboxylysine modification is found at Lys127. Cys197 contacts [2Fe-2S] cluster. Mg(2+) is bound at residue Glu448. Catalysis depends on Ser474, which acts as the Proton acceptor.

The protein belongs to the IlvD/Edd family. As to quaternary structure, homodimer. The cofactor is [2Fe-2S] cluster. Mg(2+) serves as cofactor.

The enzyme catalyses (2R)-2,3-dihydroxy-3-methylbutanoate = 3-methyl-2-oxobutanoate + H2O. The catalysed reaction is (2R,3R)-2,3-dihydroxy-3-methylpentanoate = (S)-3-methyl-2-oxopentanoate + H2O. The protein operates within amino-acid biosynthesis; L-isoleucine biosynthesis; L-isoleucine from 2-oxobutanoate: step 3/4. Its pathway is amino-acid biosynthesis; L-valine biosynthesis; L-valine from pyruvate: step 3/4. Its function is as follows. Functions in the biosynthesis of branched-chain amino acids. Catalyzes the dehydration of (2R,3R)-2,3-dihydroxy-3-methylpentanoate (2,3-dihydroxy-3-methylvalerate) into 2-oxo-3-methylpentanoate (2-oxo-3-methylvalerate) and of (2R)-2,3-dihydroxy-3-methylbutanoate (2,3-dihydroxyisovalerate) into 2-oxo-3-methylbutanoate (2-oxoisovalerate), the penultimate precursor to L-isoleucine and L-valine, respectively. The polypeptide is Dihydroxy-acid dehydratase (Francisella tularensis subsp. novicida (strain U112)).